Consider the following 177-residue polypeptide: Decaprenylphosphoryl-5-phosphoribose phosphatase (177 aa).

The next 4 helical transmembrane spans lie at 35–55, 62–82, 124–144, and 150–170; these read HFGEHCIGWLILALLGAIALP, LVAGAGAFVAHAIAVLIKRLV, GLPLPVVLVPPMALSRILLGV, and VAVGVALGATVGAIVDSVGGG.

This sequence belongs to the PA-phosphatase related phosphoesterase family.

It is found in the cell membrane. It catalyses the reaction trans,octa-cis-decaprenylphospho-beta-D-ribofuranose 5-phosphate + H2O = trans,octa-cis-decaprenylphospho-beta-D-ribofuranose + phosphate. It functions in the pathway cell wall biogenesis; cell wall polysaccharide biosynthesis. In terms of biological role, phosphatase involved in the biosynthesis of decaprenylphosphoryl arabinose (DPA), which serves as the arabinose donor for the biosynthesis of arabinogalactan, the major mycobacterial cell wall polysaccharide. Catalyzes the dephosphorylation of decaprenylphosphoryl-5-phosphoribose (DPPR) to decaprenyl-phosphoribose (DPR). The protein is Decaprenylphosphoryl-5-phosphoribose phosphatase of Mycobacterium tuberculosis (strain CDC 1551 / Oshkosh).